The chain runs to 873 residues: MDIAKWVEHARTCYSTQLDTKIKVIGVIGKDYPDHGKGDNINCYLRENVFPVAATEDETCTIRGHFSEDDQILFLVMNGVDDVANIRKCLKSNPKSNYFDAMAESECQQIRMLHFLFISCHFIIIFEQTSRIDLELMRFLKKVNSARIQLRKKINQRLVASDLRDVSFNNRILSSAESEGRMVVPRLLIAFQRNNIRPDVNPGKKLQRELYEKLEKNLDNQFSDILKLYDLIDCGASSLCQLNETIPVVHLLNPKIVKRDIIGEMFEILMADAENTKISGNAGTLPSNNSFVKFLEDNFRSEKNEISLENVIELMNCLQCVLDGDLEEKHEKTAIQTFIKRIQNDHMEEARRLYTNAQRPGERRGADRFKDSEKPVKIRSKEEHLMRFNEATHYIDSVVGVNSREALSQLQAQCNEMWQSDMRACESVSMMGRSCVRKIHPTFGDQTAPEHRWTAHDASNTMISTCVCGRKQLIRPEPFSVKEANSDFYDHPDFKCCRRLWRYQFQLYQEDSEEKDDIMWADRESNSLRAAKKMAQREDELAEEDTDLDIPESLLDPDSTSPSDEDDVRVRTMSSSESSSQESDAYLRPTSRRDESMASKTERELTIDHVKRMQKLELAGKSEDFLITVPNSMTTGKLPIFPSWHLTSLGDSSIYSHGAGLKNQPNFKIGGDYLSPVVVLLDVNFDVWNRDLNKIRSEDFSRKCGKDNKDDSARVKLFVGFEYECSRGHRFFVDYNGEPLIYSKGSNVIRESAHRSSLGNVLQADLPIRRPCTCRKLPLQSAQLQKVHVVTPKAPVHITIDPKVLIPTHEGVYGTGQEPLELHHSKYYILHLPTVYSGPSGAWMPGEFNPEKQGVWMGGALKVAYKPVMSFKW.

Residues 531–604 (AKKMAQREDE…ESMASKTERE (74 aa)) form a disordered region. Residues 540-550 (ELAEEDTDLDI) show a composition bias toward acidic residues. Low complexity-rich tracts occupy residues 551-562 (PESLLDPDSTSP) and 574-583 (SSSESSSQES). Residues 591–604 (SRRDESMASKTERE) are compositionally biased toward basic and acidic residues.

This sequence belongs to the SMG8 family.

Involved in nonsense-mediated decay (NMD) of mRNAs containing premature stop codons. Probable component of kinase complex containing smg-1 and recruited to stalled ribosomes. The polypeptide is Nonsense-mediated mRNA decay factor SMG8 (smg-8) (Caenorhabditis elegans).